A 770-amino-acid chain; its full sequence is Penicillin-binding protein 1C (770 aa).

Topologically, residues 1-8 (MPRLLTKR) are cytoplasmic. Residues 9–29 (GCWITLAAAPFLLFLAAWGAD) form a helical; Signal-anchor for type II membrane protein membrane-spanning segment. Residues 30–770 (KLWPLPLHEV…QIATVKFVMQ (741 aa)) are Periplasmic-facing. The transglycosylase stretch occupies residues 43–213 (RVVVAQDGTP…SRLRPDRWPE (171 aa)). Residue glutamate 84 is the Proton donor; for transglycosylase activity of the active site. Positions 278 to 559 (AGLQRRLEEL…FASAVPLLNQ (282 aa)) are transpeptidase. Serine 342 functions as the Acyl-ester intermediate; for transpeptidase activity in the catalytic mechanism.

In the N-terminal section; belongs to the glycosyltransferase 51 family. This sequence in the C-terminal section; belongs to the transpeptidase family.

Its subcellular location is the cell inner membrane. It catalyses the reaction [GlcNAc-(1-&gt;4)-Mur2Ac(oyl-L-Ala-gamma-D-Glu-L-Lys-D-Ala-D-Ala)](n)-di-trans,octa-cis-undecaprenyl diphosphate + beta-D-GlcNAc-(1-&gt;4)-Mur2Ac(oyl-L-Ala-gamma-D-Glu-L-Lys-D-Ala-D-Ala)-di-trans,octa-cis-undecaprenyl diphosphate = [GlcNAc-(1-&gt;4)-Mur2Ac(oyl-L-Ala-gamma-D-Glu-L-Lys-D-Ala-D-Ala)](n+1)-di-trans,octa-cis-undecaprenyl diphosphate + di-trans,octa-cis-undecaprenyl diphosphate + H(+). It participates in cell wall biogenesis; peptidoglycan biosynthesis. Its activity is regulated as follows. Transglycosylase activity can be inhibited by moenomycin. Functionally, cell wall formation. The enzyme has a penicillin-insensitive transglycosylase N-terminal domain (formation of linear glycan strands) and a transpeptidase C-terminal domain which may not be functional. In Escherichia coli (strain K12), this protein is Penicillin-binding protein 1C (pbpC).